We begin with the raw amino-acid sequence, 327 residues long: uncharacterized protein (327 aa).

A helical membrane pass occupies residues 12–32 (LVVVVVAIAIFTLVLLMLWEG). Positions 149-170 (AFSAVETSEGSDQESEGADEQG) are disordered. The span at 157 to 167 (EGSDQESEGAD) shows a compositional bias: acidic residues. Positions 162–227 (ESEGADEQGK…LDEENREVAE (66 aa)) form a coiled coil.

It is found in the membrane. This is an uncharacterized protein from Encephalitozoon cuniculi (strain GB-M1) (Microsporidian parasite).